Reading from the N-terminus, the 631-residue chain is Phosphomethylpyrimidine synthase (631 aa).

Substrate is bound by residues N239, M268, Y297, H333, 353 to 355 (SRG), 394 to 397 (DGLR), and E433. Zn(2+) is bound at residue H437. A substrate-binding site is contributed by Y460. Residue H501 coordinates Zn(2+). Positions 581, 584, and 589 each coordinate [4Fe-4S] cluster.

Belongs to the ThiC family. Homodimer. The cofactor is [4Fe-4S] cluster.

It carries out the reaction 5-amino-1-(5-phospho-beta-D-ribosyl)imidazole + S-adenosyl-L-methionine = 4-amino-2-methyl-5-(phosphooxymethyl)pyrimidine + CO + 5'-deoxyadenosine + formate + L-methionine + 3 H(+). Its pathway is cofactor biosynthesis; thiamine diphosphate biosynthesis. Functionally, catalyzes the synthesis of the hydroxymethylpyrimidine phosphate (HMP-P) moiety of thiamine from aminoimidazole ribotide (AIR) in a radical S-adenosyl-L-methionine (SAM)-dependent reaction. This Shigella flexneri serotype 5b (strain 8401) protein is Phosphomethylpyrimidine synthase.